The chain runs to 349 residues: GDP-mannose:glycolipid 4-beta-D-mannosyltransferase (349 aa).

The first 14 residues, 1–14, serve as a signal peptide directing secretion; it reads MSASASLPVTRAAA.

The protein belongs to the glycosyltransferase 94 family.

The protein localises to the cell inner membrane. It carries out the reaction beta-D-GlcA-(1-&gt;2)-alpha-D-Man-(1-&gt;3)-beta-D-Glc-(1-&gt;4)-alpha-D-Glc-di-trans,octa-cis-undecaprenyl diphosphate + GDP-alpha-D-mannose = beta-D-Man-(1-&gt;4)-beta-D-GlcA-(1-&gt;2)-alpha-D-Man-(1-&gt;3)-beta-D-Glc-(1-&gt;4)-alpha-D-Glc-di-trans,octa-cis-undecaprenyl diphosphate + GDP + H(+). The protein operates within glycan biosynthesis; xanthan biosynthesis. Nonprocessive beta-mannosyltransferase that catalyzes the transfer of a mannose residue from GDP-mannose to glucuronic acid-beta-1,2-mannose-alpha-1,3-glucose-beta-1,4-glucose-PP-polyisoprenyl to form the lipid-linked pentasaccharide repeating unit of xanthan, Man-GlcA-Man-Glc(2)-PP-Pol. Is involved in the biosynthesis of the exopolysaccharide xanthan. To a lesser extent, can also use ADP-Man and even GDP-Glc as sugar donor substrates in vitro. Is unable to transfer a Man residue to the free-tetrasaccharide GlcA-Man-Glc(2) used as an acceptor, which indicates that the diphosphate group and the lipid moiety in the acceptor substrate are of major importance for acceptor binding and catalysis. The chain is GDP-mannose:glycolipid 4-beta-D-mannosyltransferase (gumI) from Xanthomonas campestris pv. campestris.